The primary structure comprises 244 residues: Putative outer membrane protein RC0105 (244 aa).

The N-terminal stretch at 1-23 (MLRIVKKLGIILFVSTISINSFA) is a signal peptide.

This sequence belongs to the OmpW/AlkL family.

The protein resides in the cell outer membrane. This is Putative outer membrane protein RC0105 from Rickettsia conorii (strain ATCC VR-613 / Malish 7).